A 3341-amino-acid polypeptide reads, in one-letter code: Genome polyprotein (3341 aa).

Composition is skewed to basic and acidic residues over residues 1 to 14 (MKRK…KAPG) and 24 to 35 (REGRRKDKDKGG). Positions 1 to 57 (MKRKDLEARGKAPGRDSSTPFWGREGRRKDKDKGGESPSNRQVTLKTPIQSGRRAGK) are disordered. The Cytoplasmic portion of the chain corresponds to 1–120 (MKRKDLEARG…LESRRTTGNP (120 aa)). Over residues 37–50 (SPSNRQVTLKTPIQ) the composition is skewed to polar residues. The hydrophobic; homodimerization of capsid protein C stretch occupies residues 55–97 (AGKRQRVGLLGRLGVGWGSFLQEDIVQALIHMALVLHALFASI). Positions 117-136 (TGNPMTLAFILGFLTVLCGC) are cleaved as a propeptide — ER anchor for the capsid protein C, removed in mature form by serine protease NS3. Residues 121-141 (MTLAFILGFLTVLCGCVVIDM) traverse the membrane as a helical segment. The Extracellular segment spans residues 142–245 (QVSTTRGTEI…AFKTIRENKT (104 aa)). 2 N-linked (GlcNAc...) asparagine; by host glycosylation sites follow: N157 and N243. Residues 246–262 (IFIVALLCVAIAKRWPT) traverse the membrane as a helical segment. A topological domain (cytoplasmic) is located at residue W263. Residues 264–278 (VVILLAIGTWTTVKG) form a helical membrane-spanning segment. At 279 to 665 (EFVEPLYTLK…GVWQDLVGKF (387 aa)) the chain is on the extracellular side. N339 carries an N-linked (GlcNAc...) asparagine; by host glycan. An involved in fusion region spans residues 371 to 384 (NRGWGTGCFKWGIG). N399, N411, N575, and N611 each carry an N-linked (GlcNAc...) asparagine; by host glycan. The chain crosses the membrane as a helical span at residues 666–686 (SVGAFFSNTALLVILVLAALI). At 687-689 (DKR) the chain is on the cytoplasmic side. A helical transmembrane segment spans residues 690-705 (IAFLLVLGGYFYYVRA). At 706–1138 (DLGCGIDTTR…AKTRTSTLTR (433 aa)) the chain is on the extracellular side. Residues N794, N896, N993, and N1027 are each glycosylated (N-linked (GlcNAc...) asparagine; by host). The chain crosses the membrane as a helical span at residues 1139 to 1159 (LFLTILAMALFGLPNLFSSVG). The Cytoplasmic portion of the chain corresponds to 1160–1178 (LSAWVLLVASSSAQPQDLS). A helical membrane pass occupies residues 1179–1199 (MNLWIVLQTGSSAVLLLGYMI). The Lumenal segment spans residues 1200–1204 (RRKLA). The helical transmembrane segment at 1205 to 1225 (MVLGVHHLVTLMCVQFLFSAV) threads the bilayer. Topologically, residues 1226 to 1231 (DRYQKY) are cytoplasmic. The chain crosses the membrane as a helical span at residues 1232 to 1252 (LYGLLELMASVVLLSAYKSVL). Over 1253-1261 (QALPPEVLC) the chain is Lumenal. Residues 1262 to 1282 (FSLVMGWKTALSLATVVFLIF) traverse the membrane as a helical segment. Residues 1283–1303 (SLNAMYKYACQYHNPRNGYRD) are Cytoplasmic-facing. A helical membrane pass occupies residues 1304-1324 (SGANLWFWTVSLASAGGIWAA). At 1325–1326 (EK) the chain is on the lumenal side. A helical membrane pass occupies residues 1327–1347 (AHQPTVAAVLAFTMVVLFLYM). Over 1348 to 1403 (EQTNVSMELEFISAGETPEGVSTENDDGINIPDLKGRYGEDGIVVGAASSSGYLPE) the chain is Cytoplasmic. The helical intramembrane region spans 1404 to 1424 (LVFVFLLGFAVTSTSYFLGAL). The Cytoplasmic portion of the chain corresponds to 1425–2089 (YLLIATSTNL…TERSLTVVMA (665 aa)). Positions 1452–1630 (SDDLLGLGGP…KPTDVTESLN (179 aa)) constitute a Peptidase S7 domain. Active-site charge relay system; for serine protease NS3 activity residues include H1506, D1530, and S1589. The Helicase ATP-binding domain maps to 1627-1780 (ESLNCDSTRR…SNYAISDQSI (154 aa)). 1640–1647 (WHPGKGKT) is a binding site for ATP. The DECH box motif lies at 1729–1732 (DECH). Residues 1793–1947 (NVQKSVGAKK…TFMLEEAAYS (155 aa)) enclose the Helicase C-terminal domain. Residues 2090–2110 (FVLGVSIMLSCFIAVWALCFL) traverse the membrane as a helical segment. The Lumenal portion of the chain corresponds to 2111 to 2145 (FSLFRPKKATYEQMPSSDPLSGGVLVSTPSVLYCM). Residues 2146-2166 (GVPLGFCVVITLAMFLVYPVL) form a helical membrane-spanning segment. Residues 2167–2178 (YKSIGNRSYMDS) lie on the Cytoplasmic side of the membrane. The helical transmembrane segment at 2179–2199 (DLVKWVILGSCLICGVLAWEM) threads the bilayer. Residues 2200 to 2242 (RMFPNIRSDLMELVKAVKEPEEVVNSGPSFPSWEIAQGKGATM) lie on the Lumenal side of the membrane. The chain crosses the membrane as a helical span at residues 2243-2263 (LDSLQVFFFITVLSTKFLYWF). Over 2264–2302 (QENWTARMYAMKHPEMVSSIGGFRFDEIPFRAVLPSGFA) the chain is Cytoplasmic. An intramembrane region (helical) is located at residues 2303–2323 (IVAIASLPSVVVGLLAAGVFM). Residues 2324–2366 (AIMYCQNKWNATPKILTALDARDQRHDRPTEITSRVPLENTRS) lie on the Cytoplasmic side of the membrane. Residues 2367-2387 (IMYAFCLIFSLFWAFCTRSPG) traverse the membrane as a helical segment. At 2388 to 2412 (DFLRGSLVVGASMWQILHPRSKIHD) the chain is on the lumenal side. The helical transmembrane segment at 2413–2433 (VMDFGSMVSAIGLLEMNYLFY) threads the bilayer. Residues 2434-3341 (RFMHIAARAL…SRYRRGNDVI (908 aa)) lie on the Cytoplasmic side of the membrane. The mRNA cap 0-1 NS5-type MT domain occupies 2454-2706 (ALEKSTTIGL…SPVLPKGTRA (253 aa)). S2497 is a binding site for S-adenosyl-L-methionine. Residue K2509 is the For 2'-O-MTase activity of the active site. The S-adenosyl-L-methionine site is built by G2527, W2528, T2545, I2546, D2572, and V2573. D2587 (for 2'-O-MTase activity) is an active-site residue. I2588 contacts S-adenosyl-L-methionine. Catalysis depends on for 2'-O-MTase activity residues K2624 and E2660. Y2662 is an S-adenosyl-L-methionine binding site. Zn(2+) contacts are provided by E2881, H2885, C2890, and C2893. The 148-residue stretch at 2970–3117 (KYLIADDIAG…STDNRDFSSA (148 aa)) folds into the RdRp catalytic domain. H3152, C3168, and C3287 together coordinate Zn(2+).

This sequence in the N-terminal section; belongs to the class I-like SAM-binding methyltransferase superfamily. mRNA cap 0-1 NS5-type methyltransferase family. In terms of assembly, homodimer. Forms heterodimers with envelope protein E in the endoplasmic reticulum and Golgi. As to quaternary structure, homodimer; in the endoplasmic reticulum and Golgi. In terms of assembly, forms homodimers as well as homohexamers. NS1 may interact with NS4A. Forms a heterodimer with serine protease NS3. May form homooligomers. As to quaternary structure, forms a heterodimer with NS2B. Interacts with NS4B. Interacts with unphosphorylated RNA-directed RNA polymerase NS5; this interaction stimulates RNA-directed RNA polymerase NS5 guanylyltransferase activity. In terms of assembly, interacts with serine protease NS3. Interacts with host STAT2; this interaction inhibits the phosphorylation of the latter, and, when all viral proteins are present (polyprotein), targets STAT2 for degradation. Genome polyprotein: Specific enzymatic cleavages in vivo yield mature proteins. Cleavages in the lumen of endoplasmic reticulum are performed by host signal peptidase, whereas cleavages in the cytoplasmic side are performed by serine protease NS3. Signal cleavage at the 2K-4B site requires a prior NS3 protease-mediated cleavage at the 4A-2K site. In terms of processing, cleaved in post-Golgi vesicles by a host furin, releasing the mature small envelope protein M, and peptide pr. This cleavage is incomplete as up to 30% of viral particles still carry uncleaved prM. Post-translationally, N-glycosylated. N-glycosylated. The excreted form is glycosylated and this is required for efficient secretion of the protein from infected cells. In terms of processing, phosphorylated on serines residues. This phosphorylation may trigger NS5 nuclear localization.

The protein resides in the virion. The protein localises to the host nucleus. Its subcellular location is the secreted. It localises to the virion membrane. It is found in the host endoplasmic reticulum membrane. The catalysed reaction is Selective hydrolysis of -Xaa-Xaa-|-Yaa- bonds in which each of the Xaa can be either Arg or Lys and Yaa can be either Ser or Ala.. It catalyses the reaction RNA(n) + a ribonucleoside 5'-triphosphate = RNA(n+1) + diphosphate. The enzyme catalyses a ribonucleoside 5'-triphosphate + H2O = a ribonucleoside 5'-diphosphate + phosphate + H(+). It carries out the reaction ATP + H2O = ADP + phosphate + H(+). The catalysed reaction is a 5'-end (5'-triphosphoguanosine)-ribonucleoside in mRNA + S-adenosyl-L-methionine = a 5'-end (N(7)-methyl 5'-triphosphoguanosine)-ribonucleoside in mRNA + S-adenosyl-L-homocysteine. It catalyses the reaction a 5'-end (N(7)-methyl 5'-triphosphoguanosine)-ribonucleoside in mRNA + S-adenosyl-L-methionine = a 5'-end (N(7)-methyl 5'-triphosphoguanosine)-(2'-O-methyl-ribonucleoside) in mRNA + S-adenosyl-L-homocysteine + H(+). Its function is as follows. Plays a role in virus budding by binding to the cell membrane and gathering the viral RNA into a nucleocapsid that forms the core of a mature virus particle. During virus entry, may induce genome penetration into the host cytoplasm after hemifusion induced by the surface proteins. Can migrate to the cell nucleus where it modulates host functions. Functionally, prevents premature fusion activity of envelope proteins in trans-Golgi by binding to envelope protein E at pH6.0. After virion release in extracellular space, gets dissociated from E dimers. In terms of biological role, acts as a chaperone for envelope protein E during intracellular virion assembly by masking and inactivating envelope protein E fusion peptide. prM is the only viral peptide matured by host furin in the trans-Golgi network probably to avoid catastrophic activation of the viral fusion activity in acidic Golgi compartment prior to virion release. prM-E cleavage is inefficient, and many virions are only partially matured. These uncleaved prM would play a role in immune evasion. May play a role in virus budding. Exerts cytotoxic effects by activating a mitochondrial apoptotic pathway through M ectodomain. May display a viroporin activity. Its function is as follows. Binds to host cell surface receptor and mediates fusion between viral and cellular membranes. Envelope protein is synthesized in the endoplasmic reticulum in the form of heterodimer with protein prM. They play a role in virion budding in the ER, and the newly formed immature particle is covered with 60 spikes composed of heterodimer between precursor prM and envelope protein E. The virion is transported to the Golgi apparatus where the low pH causes dissociation of PrM-E heterodimers and formation of E homodimers. prM-E cleavage is inefficient, and many virions are only partially matured. These uncleaved prM would play a role in immune evasion. Functionally, involved in immune evasion, pathogenesis and viral replication. Once cleaved off the polyprotein, is targeted to three destinations: the viral replication cycle, the plasma membrane and the extracellular compartment. May play a role in viral genome replication. Assist membrane bending and envelopment of genomic RNA at the endoplasmic reticulum. Excreted as a hexameric lipoparticle that plays a role against host immune response. In terms of biological role, component of the viral RNA replication complex that functions in virion assembly and antagonizes the host immune response. Required cofactor for the serine protease function of NS3. May have membrane-destabilizing activity and form viroporins. Its function is as follows. Displays three enzymatic activities: serine protease, NTPase and RNA helicase. NS3 serine protease, in association with NS2B, performs its autocleavage and cleaves the polyprotein at dibasic sites in the cytoplasm: C-prM, NS2A-NS2B, NS2B-NS3, NS3-NS4A, NS4A-2K and NS4B-NS5. NS3 RNA helicase binds RNA and unwinds dsRNA in the 3' to 5' direction. Functionally, regulates the ATPase activity of the NS3 helicase activity. NS4A allows NS3 helicase to conserve energy during unwinding. In terms of biological role, functions as a signal peptide for NS4B and is required for the interferon antagonism activity of the latter. Inhibits interferon (IFN)-induced host STAT1 phosphorylation and nuclear translocation, thereby preventing the establishment of a cellular antiviral state by blocking the IFN-alpha/beta pathway. Its function is as follows. Replicates the viral (+) and (-) RNA genome, and performs the capping of genomes in the cytoplasm. NS5 methylates viral RNA cap at guanine N-7 and ribose 2'-O positions. Besides its role in RNA genome replication, also prevents the establishment of cellular antiviral state by blocking the interferon-alpha/beta (IFN-alpha/beta) signaling pathway. Inhibits host TYK2 and STAT2 phosphorylation, thereby preventing activation of JAK-STAT signaling pathway. In Aedes (CFA flavivirus), this protein is Genome polyprotein.